The sequence spans 525 residues: Ribosomal protein S6 kinase beta-1 (525 aa).

Residues 1–54 (MRRRRRRDGFYPAPDFRDREAEDMAGVFDIDLDQPEDAGSEDELEEGGQLNESM) form a disordered region. The short motif at 28 to 32 (FDIDL) is the TOS motif element. Positions 30–46 (IDLDQPEDAGSEDELEE) are enriched in acidic residues. Residues 91–352 (FELLRVLGKG…AGEVQAHPFF (262 aa)) enclose the Protein kinase domain. ATP is bound by residues 97–105 (LGKGGYGKV) and Lys123. The active-site Proton acceptor is Asp218. Thr252 bears the Phosphothreonine; by PDPK1 mark. The AGC-kinase C-terminal domain maps to 353–423 (RHINWEELLA…VAPSVLESVK (71 aa)). The disordered stretch occupies residues 380 to 399 (SQFDSKFTRQTPVDSPDDST). Over residues 381-399 (QFDSKFTRQTPVDSPDDST) the composition is skewed to polar residues. Ser394 is subject to Phosphoserine. At Thr412 the chain carries Phosphothreonine; by MTOR, NEK6 and NEK7. The segment at 424–525 (EKFSFEPKIR…KRPEHLRMNL (102 aa)) is autoinhibitory domain. Ser434 and Ser441 each carry phosphoserine. Thr444 is subject to Phosphothreonine. Ser447 and Ser452 each carry phosphoserine. The tract at residues 486-509 (VTTSGEASAPLPIRQPNSGPYKKQ) is disordered. At Lys516 the chain carries N6-acetyllysine.

The protein belongs to the protein kinase superfamily. AGC Ser/Thr protein kinase family. S6 kinase subfamily. As to quaternary structure, interacts with PPP1R9A/neurabin-1. Interacts with RPTOR. Interacts with IRS1. Interacts with EIF3B and EIF3C. Interacts with TRAF4. Interacts with POLDIP3. Interacts (via N-terminus) with IER5. Phosphorylation at Thr-412 is regulated by mTORC1. The phosphorylation at this site is maintained by an agonist-dependent autophosphorylation mechanism. Activated by phosphorylation at Thr-252 by PDPK1. Dephosphorylation by PPP1CC at Thr-412 in mitochondrion.

The protein resides in the cytoplasm. It localises to the synapse. Its subcellular location is the synaptosome. It is found in the mitochondrion outer membrane. The protein localises to the mitochondrion. The enzyme catalyses L-seryl-[protein] + ATP = O-phospho-L-seryl-[protein] + ADP + H(+). It carries out the reaction L-threonyl-[protein] + ATP = O-phospho-L-threonyl-[protein] + ADP + H(+). Activation requires multiple phosphorylation events on serine/threonine residues. Activation appears to be first mediated by phosphorylation of multiple sites in the autoinhibitory domain, which facilitates phosphorylation at Thr-412, disrupting the autoinhibitory mechanism and allowing phosphorylation of Thr-252 by PDPK1. The active conformation of the kinase is believed to be stabilized by a mechanism involving three conserved phosphorylation sites located in the kinase domain activation loop (Thr-252) and in the AGC-kinase C-terminal domain (Ser-394 in the middle of the tail/linker region and Thr-412 within a hydrophobic motif at its end). Activated by mTORC1; isoform Alpha I and isoform Alpha II are sensitive to rapamycin, which inhibits activating phosphorylation at Thr-412. Activated by PDPK1. Functionally, serine/threonine-protein kinase that acts downstream of mTOR signaling in response to growth factors and nutrients to promote cell proliferation, cell growth and cell cycle progression. Regulates protein synthesis through phosphorylation of EIF4B, RPS6 and EEF2K, and contributes to cell survival by repressing the pro-apoptotic function of BAD. Under conditions of nutrient depletion, the inactive form associates with the EIF3 translation initiation complex. Upon mitogenic stimulation, phosphorylation by the mechanistic target of rapamycin complex 1 (mTORC1) leads to dissociation from the EIF3 complex and activation. The active form then phosphorylates and activates several substrates in the pre-initiation complex, including the EIF2B complex and the cap-binding complex component EIF4B. Also controls translation initiation by phosphorylating a negative regulator of EIF4A, PDCD4, targeting it for ubiquitination and subsequent proteolysis. Promotes initiation of the pioneer round of protein synthesis by phosphorylating POLDIP3/SKAR. In response to IGF1, activates translation elongation by phosphorylating EEF2 kinase (EEF2K), which leads to its inhibition and thus activation of EEF2. Also plays a role in feedback regulation of mTORC2 by mTORC1 by phosphorylating MAPKAP1/SIN1, MTOR and RICTOR, resulting in the inhibition of mTORC2 and AKT1 signaling. Also involved in feedback regulation of mTORC1 and mTORC2 by phosphorylating DEPTOR. Mediates cell survival by phosphorylating the pro-apoptotic protein BAD and suppressing its pro-apoptotic function. Phosphorylates mitochondrial URI1 leading to dissociation of a URI1-PPP1CC complex. The free mitochondrial PPP1CC can then dephosphorylate RPS6KB1 at Thr-412, which is proposed to be a negative feedback mechanism for the RPS6KB1 anti-apoptotic function. Mediates TNF-alpha-induced insulin resistance by phosphorylating IRS1 at multiple serine residues, resulting in accelerated degradation of IRS1. In cells lacking functional TSC1-2 complex, constitutively phosphorylates and inhibits GSK3B. May be involved in cytoskeletal rearrangement through binding to neurabin. Phosphorylates and activates the pyrimidine biosynthesis enzyme CAD, downstream of MTOR. Following activation by mTORC1, phosphorylates EPRS and thereby plays a key role in fatty acid uptake by adipocytes and also most probably in interferon-gamma-induced translation inhibition. This chain is Ribosomal protein S6 kinase beta-1 (RPS6KB1), found in Oryctolagus cuniculus (Rabbit).